A 100-amino-acid polypeptide reads, in one-letter code: Urease subunit gamma (100 aa).

It belongs to the urease gamma subunit family. As to quaternary structure, heterotrimer of UreA (gamma), UreB (beta) and UreC (alpha) subunits. Three heterotrimers associate to form the active enzyme.

The protein localises to the cytoplasm. It catalyses the reaction urea + 2 H2O + H(+) = hydrogencarbonate + 2 NH4(+). It functions in the pathway nitrogen metabolism; urea degradation; CO(2) and NH(3) from urea (urease route): step 1/1. The protein is Urease subunit gamma of Nostoc sp. (strain PCC 7120 / SAG 25.82 / UTEX 2576).